The sequence spans 348 residues: Phosphoribosylformylglycinamidine cyclo-ligase (348 aa).

Belongs to the AIR synthase family.

The protein localises to the cytoplasm. It catalyses the reaction 2-formamido-N(1)-(5-O-phospho-beta-D-ribosyl)acetamidine + ATP = 5-amino-1-(5-phospho-beta-D-ribosyl)imidazole + ADP + phosphate + H(+). It participates in purine metabolism; IMP biosynthesis via de novo pathway; 5-amino-1-(5-phospho-D-ribosyl)imidazole from N(2)-formyl-N(1)-(5-phospho-D-ribosyl)glycinamide: step 2/2. In Sorangium cellulosum (strain So ce56) (Polyangium cellulosum (strain So ce56)), this protein is Phosphoribosylformylglycinamidine cyclo-ligase.